The chain runs to 123 residues: Methylmalonyl-CoA carboxyltransferase 1.3S subunit (123 aa).

Residues 46-123 enclose the Biotinyl-binding domain; that stretch reads GAGAGKAGEG…QGGQGLIKIG (78 aa). The residue at position 89 (Lys89) is an N6-biotinyllysine.

Transcarboxylase is composed of three subunits: 1.3S, 5S, and 12S. The core of the enzyme is composed of six 12S subunits. On each side of the core there are three pairs of 5S subunits. Each 5S dimer is attached to the core by two 1.3S subunits. Thus the total number of chains is 30 (6 + 12 + 12).

The enzyme catalyses (S)-methylmalonyl-CoA + pyruvate = propanoyl-CoA + oxaloacetate. The biotinyl 1.3S subunit serves as a carboxyl carrier between the substrate-binding sites on the 12S and 5S subunits. This Propionibacterium freudenreichii subsp. shermanii protein is Methylmalonyl-CoA carboxyltransferase 1.3S subunit.